We begin with the raw amino-acid sequence, 200 residues long: Diadenylate cyclase (200 aa).

A helical transmembrane segment spans residues 5–25 (ILLFITLIFLLLLFVFLIAFA). The 158-residue stretch at 28–185 (NKRVRNYVVR…KGVIKTLSSN (158 aa)) folds into the DAC domain.

The protein belongs to the adenylate cyclase family. DacB/CdaS subfamily. Probably oligomerizes.

Its subcellular location is the cell membrane. It catalyses the reaction 2 ATP = 3',3'-c-di-AMP + 2 diphosphate. Its function is as follows. Catalyzes the condensation of 2 ATP molecules into cyclic di-AMP (c-di-AMP), a second messenger used to regulate differing processes in different bacteria. The polypeptide is Diadenylate cyclase (Mycoplasma genitalium (strain ATCC 33530 / DSM 19775 / NCTC 10195 / G37) (Mycoplasmoides genitalium)).